Consider the following 141-residue polypeptide: Large ribosomal subunit protein uL11 (141 aa).

The protein belongs to the universal ribosomal protein uL11 family. Part of the ribosomal stalk of the 50S ribosomal subunit. Interacts with L10 and the large rRNA to form the base of the stalk. L10 forms an elongated spine to which L12 dimers bind in a sequential fashion forming a multimeric L10(L12)X complex. Post-translationally, one or more lysine residues are methylated.

Its function is as follows. Forms part of the ribosomal stalk which helps the ribosome interact with GTP-bound translation factors. This chain is Large ribosomal subunit protein uL11, found in Lactobacillus acidophilus (strain ATCC 700396 / NCK56 / N2 / NCFM).